Reading from the N-terminus, the 605-residue chain is MQMIGGEMWTAAGRRLHQQRDLHAILRTAHRRCCTRPIGGGLDAPAAPPGDLRTLSGVGMLIHQFKALLAPKKIYPWRSSHLQSLEVRRLHTAPSNAAAAAAVTDGGDQDKTKSAKDDDGDDKVQCKKEKIVTATKKGAAVLDQYIPDNIKTAYHVLQVGDEIYDATMNQTNVGGNNNKFYIIQALESDAGGNFMVYSRWGRVGTRDIHWSYRKGSHCYAHKYTWLEMDYGEADKETNKKTSSITNQLEETKLETRTASFISLICDISMMKQQMVEIGYNADKLPLGKLSKSTILKGYDVLKRISNVISGADTDRTQLEQLTGEFYSVIPHDFGFKKMSEFIIDTPQKLKAKLEMVEALSEIEIAIKLLEDDSSDQDHPLYARYKQFCCDFTPLEVDSEEYSMIKTYLTNTHGKTHTGYTVDIVQIFKVSRLGEMERFQKFASAGNRMLLWHGSRLTNWAGILSQGLRIAPPEAPISGFMFGKGVYFADMFSKSANYCCASEACKSGVMLLCEVALGEMNELLYGDFGADNLPNGKLSTKGVGQTEPNIAESKITDDGMVIPLGKPEKVPSRRGSLMYNEYIVYNVDQIRMRYILNVNFNFKRWG.

Residues 96 to 122 (NAAAAAAVTDGGDQDKTKSAKDDDGDD) are disordered. Residues 108 to 122 (DQDKTKSAKDDDGDD) are compositionally biased toward basic and acidic residues. Positions 153 to 260 (AYHVLQVGDE…TKLETRTASF (108 aa)) constitute a WGR domain. A PARP alpha-helical domain is found at 250–370 (ETKLETRTAS…EIEIAIKLLE (121 aa)). Residues 378–605 (HPLYARYKQF…NVNFNFKRWG (228 aa)) enclose the PARP catalytic domain.

The protein belongs to the ARTD/PARP family.

Its subcellular location is the nucleus. It carries out the reaction NAD(+) + (ADP-D-ribosyl)n-acceptor = nicotinamide + (ADP-D-ribosyl)n+1-acceptor + H(+).. The enzyme catalyses L-aspartyl-[protein] + NAD(+) = 4-O-(ADP-D-ribosyl)-L-aspartyl-[protein] + nicotinamide. It catalyses the reaction L-glutamyl-[protein] + NAD(+) = 5-O-(ADP-D-ribosyl)-L-glutamyl-[protein] + nicotinamide. Its function is as follows. Involved in the base excision repair (BER) pathway, by catalyzing the poly(ADP-ribosyl)ation of a limited number of acceptor proteins involved in chromatin architecture and in DNA metabolism. This modification follows DNA damages and appears as an obligatory step in a detection/signaling pathway leading to the reparation of DNA strand breaks. The sequence is that of Poly [ADP-ribose] polymerase 2-B (PARP2-B) from Oryza sativa subsp. japonica (Rice).